The primary structure comprises 87 residues: U3-theraphotoxin-Hhn1a 8 (87 aa).

Positions 1-24 (MVNMKASMFLTFAGLVLLFVVCYA) are cleaved as a signal peptide. A propeptide spanning residues 25–52 (SGSEEKEFPKEMLSSIFAVDNDFKQEER) is cleaved from the precursor. Cystine bridges form between Cys-54/Cys-67, Cys-61/Cys-72, and Cys-66/Cys-79.

This sequence belongs to the neurotoxin 10 (Hwtx-1) family. 51 (Hntx-8) subfamily. Hntx-8 sub-subfamily. In terms of tissue distribution, expressed by the venom gland.

The protein localises to the secreted. Ion channel inhibitor. In Cyriopagopus hainanus (Chinese bird spider), this protein is U3-theraphotoxin-Hhn1a 8.